Consider the following 149-residue polypeptide: Endoribonuclease YbeY (149 aa).

3 residues coordinate Zn(2+): H101, H105, and H111.

This sequence belongs to the endoribonuclease YbeY family. Zn(2+) serves as cofactor.

It localises to the cytoplasm. Its function is as follows. Single strand-specific metallo-endoribonuclease involved in late-stage 70S ribosome quality control and in maturation of the 3' terminus of the 16S rRNA. This chain is Endoribonuclease YbeY, found in Thermotoga neapolitana (strain ATCC 49049 / DSM 4359 / NBRC 107923 / NS-E).